The sequence spans 307 residues: Serine/threonine-protein phosphatase PP2A-3 catalytic subunit (307 aa).

Mn(2+) contacts are provided by Asp55, His57, Asp83, and Asn115. His116 (proton donor) is an active-site residue. Positions 165 and 239 each coordinate Mn(2+).

Belongs to the PPP phosphatase family. PP-2A subfamily. It depends on Mn(2+) as a cofactor.

The protein localises to the cytoplasm. It carries out the reaction O-phospho-L-seryl-[protein] + H2O = L-seryl-[protein] + phosphate. The enzyme catalyses O-phospho-L-threonyl-[protein] + H2O = L-threonyl-[protein] + phosphate. The polypeptide is Serine/threonine-protein phosphatase PP2A-3 catalytic subunit (PP2A3) (Oryza sativa subsp. indica (Rice)).